Here is a 444-residue protein sequence, read N- to C-terminus: Alpha-1,3-mannosyl-glycoprotein 2-beta-N-acetylglucosaminyltransferase (444 aa).

Residues 1–6 are Cytoplasmic-facing; sequence MARISC. Residues 7 to 24 form a helical; Signal-anchor for type II membrane protein membrane-spanning segment; sequence DLRFLLIPAAFMFIYIQM. At 25-444 the chain is on the lumenal side; sequence RLFQTQSQYA…SVMQLGIRNS (420 aa). A coiled-coil region spans residues 61–92; the sequence is KQSRIVALEDMKNRQDEELVQLKDLIQTFEKK. Substrate contacts are provided by R115, D144, H188, and D210. Position 211 (D211) interacts with Mn(2+). D287 acts as the Proton acceptor in catalysis. A substrate-binding site is contributed by S318. Residue N351 is glycosylated (N-linked (GlcNAc...) asparagine).

The protein belongs to the glycosyltransferase 13 family. It depends on Mn(2+) as a cofactor. Post-translationally, glycosylated. In terms of tissue distribution, expressed in roots, stems, leaves and flowers.

Its subcellular location is the golgi apparatus membrane. It catalyses the reaction N(4)-(alpha-D-Man-(1-&gt;3)-[alpha-D-Man-(1-&gt;3)-[alpha-D-Man-(1-&gt;6)]-alpha-D-Man-(1-&gt;6)]-beta-D-Man-(1-&gt;4)-beta-D-GlcNAc-(1-&gt;4)-beta-D-GlcNAc)-L-asparaginyl-[protein] (N-glucan mannose isomer 5A1,2) + UDP-N-acetyl-alpha-D-glucosamine = N(4)-{beta-D-GlcNAc-(1-&gt;2)-alpha-D-Man-(1-&gt;3)-[alpha-D-Man-(1-&gt;3)-[alpha-D-Man-(1-&gt;6)]-alpha-D-Man-(1-&gt;6)]-beta-D-Man-(1-&gt;4)-beta-D-GlcNAc-(1-&gt;4)-beta-D-GlcNAc}-L-asparaginyl-[protein] + UDP + H(+). It participates in protein modification; protein glycosylation. In terms of biological role, initiates complex N-linked carbohydrate formation. Essential for the conversion of high-mannose to hybrid and complex N-glycans. Required for normal root growth and morphology. The protein is Alpha-1,3-mannosyl-glycoprotein 2-beta-N-acetylglucosaminyltransferase of Arabidopsis thaliana (Mouse-ear cress).